Reading from the N-terminus, the 1391-residue chain is ESX-5 secretion system protein EccC5 (1391 aa).

Helical transmembrane passes span 38 to 58 (WLIV…AMVF) and 65 to 85 (FGGI…MMMF). FtsK domains lie at 476 to 678 (GELL…GAAQ), 858 to 1052 (QPPW…EDAK), and 1161 to 1354 (LAPV…DPDE). ATP-binding positions include 499–506 (GTTGSGKS), 876–883 (GAGGSGKT), and 1178–1185 (GRRECGRT).

Part of the ESX-5 / type VII secretion system (T7SS), which is composed of cytosolic and membrane components. The ESX-5 membrane complex is composed of EccB5, EccC5, EccD5 and EccE5.

The protein localises to the cell inner membrane. Its function is as follows. Part of the ESX-5 specialized secretion system, which is responsible for the secretion of EsxN and a number of PE_PGRS and PPE proteins, including PPE41. The polypeptide is ESX-5 secretion system protein EccC5 (Mycobacterium tuberculosis (strain CDC 1551 / Oshkosh)).